We begin with the raw amino-acid sequence, 331 residues long: Ketol-acid reductoisomerase (NADP(+)) (331 aa).

Positions Ala2–Thr182 constitute a KARI N-terminal Rossmann domain. Residues Phe25 to Gln28, Ser51, Ser53, and Asp83 to Gln86 contribute to the NADP(+) site. Residue His108 is part of the active site. Gly134 lines the NADP(+) pocket. Residues Thr183–Ile328 enclose the KARI C-terminal knotted domain. Residues Asp191, Glu195, Glu227, and Glu231 each coordinate Mg(2+). Residue Ser252 participates in substrate binding.

The protein belongs to the ketol-acid reductoisomerase family. Mg(2+) serves as cofactor.

It catalyses the reaction (2R)-2,3-dihydroxy-3-methylbutanoate + NADP(+) = (2S)-2-acetolactate + NADPH + H(+). The enzyme catalyses (2R,3R)-2,3-dihydroxy-3-methylpentanoate + NADP(+) = (S)-2-ethyl-2-hydroxy-3-oxobutanoate + NADPH + H(+). Its pathway is amino-acid biosynthesis; L-isoleucine biosynthesis; L-isoleucine from 2-oxobutanoate: step 2/4. It functions in the pathway amino-acid biosynthesis; L-valine biosynthesis; L-valine from pyruvate: step 2/4. Its function is as follows. Involved in the biosynthesis of branched-chain amino acids (BCAA). Catalyzes an alkyl-migration followed by a ketol-acid reduction of (S)-2-acetolactate (S2AL) to yield (R)-2,3-dihydroxy-isovalerate. In the isomerase reaction, S2AL is rearranged via a Mg-dependent methyl migration to produce 3-hydroxy-3-methyl-2-ketobutyrate (HMKB). In the reductase reaction, this 2-ketoacid undergoes a metal-dependent reduction by NADPH to yield (R)-2,3-dihydroxy-isovalerate. The sequence is that of Ketol-acid reductoisomerase (NADP(+)) from Thermoanaerobacter sp. (strain X514).